The following is a 225-amino-acid chain: Protein-L-isoaspartate O-methyltransferase (225 aa).

Serine 75 is an active-site residue.

Belongs to the methyltransferase superfamily. L-isoaspartyl/D-aspartyl protein methyltransferase family.

It is found in the cytoplasm. It carries out the reaction [protein]-L-isoaspartate + S-adenosyl-L-methionine = [protein]-L-isoaspartate alpha-methyl ester + S-adenosyl-L-homocysteine. Its function is as follows. Catalyzes the methyl esterification of L-isoaspartyl residues in peptides and proteins that result from spontaneous decomposition of normal L-aspartyl and L-asparaginyl residues. It plays a role in the repair and/or degradation of damaged proteins. The sequence is that of Protein-L-isoaspartate O-methyltransferase from Xanthomonas axonopodis pv. citri (strain 306).